The following is an 83-amino-acid chain: Conotoxin Im22.1 (83 aa).

The signal sequence occupies residues 1 to 18 (MMMRVFIAMFFLLALVEA). Residues 19–26 (GWPRLYDK) constitute a propeptide that is removed on maturation.

The protein belongs to the conotoxin E superfamily. Post-translationally, contain 4 disulfide bonds. Expressed by the venom duct.

It is found in the secreted. Its function is as follows. Probable neurotoxin. In Conus imperialis (Imperial cone), this protein is Conotoxin Im22.1.